The primary structure comprises 118 residues: DNA-directed RNA polymerase subunit omega (118 aa).

The protein belongs to the RNA polymerase subunit omega family. The RNAP catalytic core consists of 2 alpha, 1 beta, 1 beta' and 1 omega subunit. When a sigma factor is associated with the core the holoenzyme is formed, which can initiate transcription.

The catalysed reaction is RNA(n) + a ribonucleoside 5'-triphosphate = RNA(n+1) + diphosphate. Promotes RNA polymerase assembly. Latches the N- and C-terminal regions of the beta' subunit thereby facilitating its interaction with the beta and alpha subunits. This is DNA-directed RNA polymerase subunit omega from Paracoccus denitrificans (strain Pd 1222).